We begin with the raw amino-acid sequence, 330 residues long: Aspartate--ammonia ligase (330 aa).

It belongs to the class-II aminoacyl-tRNA synthetase family. AsnA subfamily.

The protein localises to the cytoplasm. It catalyses the reaction L-aspartate + NH4(+) + ATP = L-asparagine + AMP + diphosphate + H(+). The protein operates within amino-acid biosynthesis; L-asparagine biosynthesis; L-asparagine from L-aspartate (ammonia route): step 1/1. This is Aspartate--ammonia ligase from Actinobacillus pleuropneumoniae serotype 7 (strain AP76).